Reading from the N-terminus, the 175-residue chain is MTINPDDDNIEILTGAAGGADTEGEGEGEGKSLTDLVEQPAKVMRIGTMIKQLLEEVRAAPLDDASRNRLREIHQTSIRELEDGLAPELREELERLTLPFTDDNVPSDAELRIAQAQLVGWLEGLFHGIQTALFAQQMAARAQLEQMRQGALPPGIQVPGAQRGGATHPGTGQYL.

Residues 152-175 are disordered; that stretch reads LPPGIQVPGAQRGGATHPGTGQYL. The HbYX motif signature appears at 173-175; the sequence is QYL.

The protein belongs to the Bpa family. Forms a homooligomeric, either hexameric or heptameric, ring-like structure which stacks co-axially with the proteasomal alpha-rings.

In terms of biological role, interacts with the core proteasome alpha-subunit (PrcA) through its C-terminal hydrophobic-tyrosine-X motif (HbYX motif). Interaction of Bpa with the proteasome stimulates proteasomal peptidase and casein degradation activity, which suggests Bpa could play a role in the removal of non-native or damaged proteins by influencing the conformation of the proteasome complex upon interaction. The polypeptide is Bacterial proteasome activator (Mycolicibacterium smegmatis (strain ATCC 700084 / mc(2)155) (Mycobacterium smegmatis)).